The sequence spans 361 residues: Queuine tRNA-ribosyltransferase (361 aa).

The active-site Proton acceptor is aspartate 89. Substrate contacts are provided by residues 89–93 (DSGGF), aspartate 143, glutamine 185, and glycine 212. The tract at residues 243–249 (GVGTPED) is RNA binding. Aspartate 262 acts as the Nucleophile in catalysis. The RNA binding; important for wobble base 34 recognition stretch occupies residues 267 to 271 (TRNAR). The Zn(2+) site is built by cysteine 300, cysteine 302, cysteine 305, and histidine 331.

Belongs to the queuine tRNA-ribosyltransferase family. As to quaternary structure, homodimer. Within each dimer, one monomer is responsible for RNA recognition and catalysis, while the other monomer binds to the replacement base PreQ1. The cofactor is Zn(2+).

The catalysed reaction is 7-aminomethyl-7-carbaguanine + guanosine(34) in tRNA = 7-aminomethyl-7-carbaguanosine(34) in tRNA + guanine. It participates in tRNA modification; tRNA-queuosine biosynthesis. Its function is as follows. Catalyzes the base-exchange of a guanine (G) residue with the queuine precursor 7-aminomethyl-7-deazaguanine (PreQ1) at position 34 (anticodon wobble position) in tRNAs with GU(N) anticodons (tRNA-Asp, -Asn, -His and -Tyr). Catalysis occurs through a double-displacement mechanism. The nucleophile active site attacks the C1' of nucleotide 34 to detach the guanine base from the RNA, forming a covalent enzyme-RNA intermediate. The proton acceptor active site deprotonates the incoming PreQ1, allowing a nucleophilic attack on the C1' of the ribose to form the product. After dissociation, two additional enzymatic reactions on the tRNA convert PreQ1 to queuine (Q), resulting in the hypermodified nucleoside queuosine (7-(((4,5-cis-dihydroxy-2-cyclopenten-1-yl)amino)methyl)-7-deazaguanosine). This chain is Queuine tRNA-ribosyltransferase, found in Nitrosomonas eutropha (strain DSM 101675 / C91 / Nm57).